A 60-amino-acid chain; its full sequence is MDEPSQGGDQKLSAMEHVKKRHEEKGFLYACLFMLCCCFCCYETCEHCLECFCCCCKKDN.

A helical membrane pass occupies residues 26–42 (GFLYACLFMLCCCFCCY).

Belongs to the CYSTM1 family. Mainly expressed in shoots, and, to a lower extent, in roots.

The protein localises to the cell membrane. It localises to the secreted. Its subcellular location is the cell wall. Confers resistance to heavy metal ions (e.g. aluminium (Al)) by chelating them at the plasma membrane of root cells, thus stopping their entry and reducing their accumulation. This chain is Protein CADMIUM TOLERANCE 4, found in Oryza sativa subsp. japonica (Rice).